The chain runs to 44 residues: Mu-conotoxin-like Cal 12.1.2h (44 aa).

Cystine bridges form between cysteine 3-cysteine 16, cysteine 11-cysteine 28, cysteine 18-cysteine 33, and cysteine 27-cysteine 38. At tryptophan 17 the chain carries 6'-bromotryptophan. Proline 23 bears the 4-hydroxyproline mark. Residues tryptophan 36 and tryptophan 37 each carry the 6'-bromotryptophan modification. At proline 39 the chain carries 4-hydroxyproline. A 6'-bromotryptophan modification is found at tryptophan 43.

As to expression, expressed by the venom duct.

The protein localises to the secreted. Functionally, mu-conotoxins block voltage-gated sodium channels. This toxin reversibly blocks voltage-gated sodium channel in cephalopods, with no alteration in the voltage dependence of sodium conductance or on the kinetics of inactivation. This chain is Mu-conotoxin-like Cal 12.1.2h, found in Californiconus californicus (California cone).